The chain runs to 469 residues: 3-isopropylmalate dehydratase large subunit (469 aa).

Residues cysteine 349, cysteine 410, and cysteine 413 each coordinate [4Fe-4S] cluster.

Belongs to the aconitase/IPM isomerase family. LeuC type 1 subfamily. In terms of assembly, heterodimer of LeuC and LeuD. Requires [4Fe-4S] cluster as cofactor.

It catalyses the reaction (2R,3S)-3-isopropylmalate = (2S)-2-isopropylmalate. Its pathway is amino-acid biosynthesis; L-leucine biosynthesis; L-leucine from 3-methyl-2-oxobutanoate: step 2/4. Functionally, catalyzes the isomerization between 2-isopropylmalate and 3-isopropylmalate, via the formation of 2-isopropylmaleate. The chain is 3-isopropylmalate dehydratase large subunit from Azoarcus sp. (strain BH72).